A 109-amino-acid chain; its full sequence is Putative double-stranded DNA mimic protein YciU (109 aa).

Belongs to the putative dsDNA mimic protein family.

Its function is as follows. May act as a double-stranded DNA (dsDNA) mimic. Probably regulates the activity of a dsDNA-binding protein. The polypeptide is Putative double-stranded DNA mimic protein YciU (Salmonella paratyphi B (strain ATCC BAA-1250 / SPB7)).